The following is a 66-amino-acid chain: uncharacterized protein (66 aa).

Low complexity predominate over residues 1 to 20 (MTIINSISNFGSNNSFSNNN). The segment at 1 to 47 (MTIINSISNFGSNNSFSNNNTVNQKSVIKRSKQMKNDNTSIGSSFKN) is disordered. Residues 36–47 (NDNTSIGSSFKN) are compositionally biased toward polar residues.

This is an uncharacterized protein from Dictyostelium discoideum (Social amoeba).